The sequence spans 474 residues: Bifunctional ribulose 5-phosphate reductase/CDP-ribitol pyrophosphorylase Bcs1 (474 aa).

A ribitol-5-phosphate cytidylyltransferase region spans residues 1 to 238 (MNKNKNIGII…DKLFQSRSHF (238 aa)). A ribulose-5-phosphate reductase region spans residues 250–474 (YDMKDQVLVV…ITNILADLYK (225 aa)).

In the N-terminal section; belongs to the IspD/TarI cytidylyltransferase family. The protein in the C-terminal section; belongs to the short-chain dehydrogenases/reductases (SDR) family. In terms of assembly, monomer.

The catalysed reaction is D-ribitol 5-phosphate + CTP + H(+) = CDP-L-ribitol + diphosphate. The enzyme catalyses D-ribitol 5-phosphate + NADP(+) = D-ribulose 5-phosphate + NADPH + H(+). It participates in capsule biogenesis; capsule polysaccharide biosynthesis. In terms of biological role, catalyzes the NADPH-dependent reduction of D-ribulose 5-phosphate to D-ribitol 5-phosphate and the further reaction of D-ribitol 5-phosphate with CTP to form CDP-ribitol. The chain is Bifunctional ribulose 5-phosphate reductase/CDP-ribitol pyrophosphorylase Bcs1 from Haemophilus influenzae.